The chain runs to 101 residues: MLTLAHYLVLGAILFAIAIVGIFLNRRNIIIILMAIELMLLAVNTNFVAFSHYLGDVHGQIFVFFVLTVAAAEAAIGLAILVTLFRKLDTINVEDLDQLKG.

3 consecutive transmembrane segments (helical) span residues 4–24 (LAHY…GIFL), 29–49 (IIII…NFVA), and 61–81 (IFVF…LAIL).

It belongs to the complex I subunit 4L family. As to quaternary structure, NDH-1 is composed of 14 different subunits. Subunits NuoA, H, J, K, L, M, N constitute the membrane sector of the complex.

The protein localises to the cell inner membrane. It catalyses the reaction a quinone + NADH + 5 H(+)(in) = a quinol + NAD(+) + 4 H(+)(out). NDH-1 shuttles electrons from NADH, via FMN and iron-sulfur (Fe-S) centers, to quinones in the respiratory chain. The immediate electron acceptor for the enzyme in this species is believed to be ubiquinone. Couples the redox reaction to proton translocation (for every two electrons transferred, four hydrogen ions are translocated across the cytoplasmic membrane), and thus conserves the redox energy in a proton gradient. The polypeptide is NADH-quinone oxidoreductase subunit K (Burkholderia ambifaria (strain MC40-6)).